The following is a 144-amino-acid chain: Large ribosomal subunit protein uL13 (144 aa).

It belongs to the universal ribosomal protein uL13 family. In terms of assembly, part of the 50S ribosomal subunit.

In terms of biological role, this protein is one of the early assembly proteins of the 50S ribosomal subunit, although it is not seen to bind rRNA by itself. It is important during the early stages of 50S assembly. This chain is Large ribosomal subunit protein uL13, found in Chloroflexus aurantiacus (strain ATCC 29366 / DSM 635 / J-10-fl).